The sequence spans 297 residues: MYPPNSSKSTAHDGGGDADTNQYDSAAGATRDFSSLGPQTHHHPPPQRQQQHQQNPNLVGHYLPGEPSSIGFDSNASSSSSLFRHRSSPAGFYDQHLPTDPNGTGFSLGRPNGGYGGGGEQGPSRLKSELRFSSGSSSHQEHNSLPRISEVEAAAAARNGVASSSMSFGNNRTNNWDNSSSHISFTIDQPGKRSKNSDFFTLETQYSMPQTTLEMATMENLMNIPEDSVPCRARAKRGFATHPRSIAERERRTRISGKLKKLQELVPNMDKQTSYADMLDLAVEHIKGLQHQVEVRP.

The segment at 1 to 145 (MYPPNSSKST…SSSHQEHNSL (145 aa)) is disordered. Phosphoserine is present on S35. Positions 68-82 (SSIGFDSNASSSSSL) are enriched in low complexity. Over residues 111-121 (PNGGYGGGGEQ) the composition is skewed to gly residues. S138 carries the phosphoserine modification. Residues 239 to 289 (FATHPRSIAERERRTRISGKLKKLQELVPNMDKQTSYADMLDLAVEHIKGL) enclose the bHLH domain.

In terms of assembly, homodimer.

It localises to the nucleus. This chain is Transcription factor bHLH129 (BHLH129), found in Arabidopsis thaliana (Mouse-ear cress).